A 201-amino-acid polypeptide reads, in one-letter code: FMN-dependent NADH:quinone oxidoreductase (201 aa).

FMN-binding positions include Ser-10, Ser-16–Ser-18, Met-96–Phe-99, and Ser-140–Gly-143.

Belongs to the azoreductase type 1 family. As to quaternary structure, homodimer. The cofactor is FMN.

The enzyme catalyses 2 a quinone + NADH + H(+) = 2 a 1,4-benzosemiquinone + NAD(+). The catalysed reaction is N,N-dimethyl-1,4-phenylenediamine + anthranilate + 2 NAD(+) = 2-(4-dimethylaminophenyl)diazenylbenzoate + 2 NADH + 2 H(+). Functionally, quinone reductase that provides resistance to thiol-specific stress caused by electrophilic quinones. In terms of biological role, also exhibits azoreductase activity. Catalyzes the reductive cleavage of the azo bond in aromatic azo compounds to the corresponding amines. In Citrobacter koseri (strain ATCC BAA-895 / CDC 4225-83 / SGSC4696), this protein is FMN-dependent NADH:quinone oxidoreductase.